The primary structure comprises 307 residues: Ribonuclease Z (307 aa).

His61, His63, Asp65, His66, His138, Asp207, and His265 together coordinate Zn(2+). Residue Asp65 is the Proton acceptor of the active site.

The protein belongs to the RNase Z family. In terms of assembly, homodimer. The cofactor is Zn(2+).

The catalysed reaction is Endonucleolytic cleavage of RNA, removing extra 3' nucleotides from tRNA precursor, generating 3' termini of tRNAs. A 3'-hydroxy group is left at the tRNA terminus and a 5'-phosphoryl group is left at the trailer molecule.. Its function is as follows. Zinc phosphodiesterase, which displays some tRNA 3'-processing endonuclease activity. Probably involved in tRNA maturation, by removing a 3'-trailer from precursor tRNA. The sequence is that of Ribonuclease Z from Methanothermobacter thermautotrophicus (strain ATCC 29096 / DSM 1053 / JCM 10044 / NBRC 100330 / Delta H) (Methanobacterium thermoautotrophicum).